Reading from the N-terminus, the 317-residue chain is Olfactory receptor 6Q1 (317 aa).

Residues 1 to 27 (MQPYTKNWTQVTEFVMMGFAGIHEAHL) lie on the Extracellular side of the membrane. N7 is a glycosylation site (N-linked (GlcNAc...) asparagine). The chain crosses the membrane as a helical span at residues 28–48 (LFFILFLTMYLFTLVENLAII). The Cytoplasmic segment spans residues 49 to 56 (LVVGLDHR). The chain crosses the membrane as a helical span at residues 57 to 77 (LRRPMYFFLTHLSCLEIWYTS). Residues 78 to 103 (VTVPKMLAGFIGVDGGKNISYADCLS) lie on the Extracellular side of the membrane. An N-linked (GlcNAc...) asparagine glycan is attached at N95. The cysteines at positions 101 and 193 are disulfide-linked. The helical transmembrane segment at 104 to 124 (QLFIFTFLGATECFLLAAMAY) threads the bilayer. Topologically, residues 125 to 143 (DRYVAICMPLHYGAFVSWG) are cytoplasmic. A helical membrane pass occupies residues 144-164 (TCIRLAAACWLVGFLTPILPI). At 165 to 201 (YLLSQLTFYGPNVIDHFSCDASPLLALSCSDVTWKET) the chain is on the extracellular side. The chain crosses the membrane as a helical span at residues 202-221 (VDFLVSLAVLLASSMVIAVS). Over 222 to 241 (YGNIVWTLLHIRSAAERWKA) the chain is Cytoplasmic. A helical membrane pass occupies residues 242–262 (FSTCAAHLTVVSLFYGTLFFM). At 263 to 275 (YVQTKVTSSINFN) the chain is on the extracellular side. The chain crosses the membrane as a helical span at residues 276–296 (KVVSVFYSVVTPMLNPLIYSL). Residues 297 to 317 (RNKEVKGALGRVFSLNFWKGQ) lie on the Cytoplasmic side of the membrane.

It belongs to the G-protein coupled receptor 1 family.

Its subcellular location is the cell membrane. Odorant receptor. This chain is Olfactory receptor 6Q1 (OR6Q1), found in Homo sapiens (Human).